Reading from the N-terminus, the 98-residue chain is uncharacterized protein (98 aa).

Residues 77–98 are disordered; the sequence is SERAGEEVPPLAVAGSDDGHDH.

The protein to M.tuberculosis Rv1991c and Rv3269.

This is an uncharacterized protein from Mycobacterium bovis (strain ATCC BAA-935 / AF2122/97).